The chain runs to 928 residues: DNA ligase 4 (928 aa).

Residues Glu302, Lys304, Arg309, Glu362, Phe409, Glu469, Lys474, Lys492, and Lys494 each coordinate ATP. The active-site N6-AMP-lysine intermediate is the Lys304. Glu362 lines the Mg(2+) pocket. A Mg(2+)-binding site is contributed by Glu469. 2 consecutive BRCT domains span residues Val673–Ile769 and Pro821–Phe927.

The protein belongs to the ATP-dependent DNA ligase family. The cofactor is Mg(2+).

The protein localises to the nucleus. It catalyses the reaction ATP + (deoxyribonucleotide)n-3'-hydroxyl + 5'-phospho-(deoxyribonucleotide)m = (deoxyribonucleotide)n+m + AMP + diphosphate.. In terms of biological role, DNA ligase involved in DNA non-homologous end joining (NHEJ); required for double-strand break (DSB) repair. Not required for the repair of DSBs induced by ionizing radiation or UV light. Has an important role in morphogenesis, positively affecting the capacity to form hyphae. This chain is DNA ligase 4 (LIG4), found in Candida albicans (strain SC5314 / ATCC MYA-2876) (Yeast).